The sequence spans 506 residues: Sucrose transport protein SUT3 (506 aa).

Residues 1-20 (MAVDMELDGGGDGKGKAPPQ) lie on the Cytoplasmic side of the membrane. Residues 21–41 (ISLSGLFLACMVAGGVQYGWA) traverse the membrane as a helical segment. Residues 42–54 (LQLSLLTPYVQTL) are Extracellular-facing. Residues 55 to 75 (GIPHALTSVMWLCGPIAGLIV) form a helical membrane-spanning segment. The Cytoplasmic segment spans residues 76–94 (QPCVGLYSDKCTSSLGRRR). A helical membrane pass occupies residues 95–115 (PFILTGCIIICISVIVIGFSS). At 116 to 135 (DIGYALGDTTEDCKVYRGPR) the chain is on the extracellular side. The helical transmembrane segment at 136-156 (YHAAAAFILGFWLLDFSNNTV) threads the bilayer. The Cytoplasmic segment spans residues 157–171 (QGPARALMADLSGRH). A helical membrane pass occupies residues 172 to 192 (GPSAANAIFCSWMALGNILGY). The Extracellular segment spans residues 193-220 (SSGSTNDWHKWFPFLMTRACCEACANLK). A helical membrane pass occupies residues 221-241 (AAFLVAVVFLGLSTAVTMVFA). Residues 242–275 (REVALDPVAAAKRNEGEASGLLAVFKGMKNLPVG) are Cytoplasmic-facing. The chain crosses the membrane as a helical span at residues 276–296 (MPSVLIVTGLTWLSWFPFILF). Residues 297 to 327 (DTDWMGREIYHGRPDGSPAEVTAFQEGVRQG) lie on the Extracellular side of the membrane. The chain crosses the membrane as a helical span at residues 328-348 (AFGLLLNSIVLGISSFLIEPM). The Cytoplasmic segment spans residues 349-355 (CRRLGAR). A helical membrane pass occupies residues 356–376 (AVWVMSSAVVCVAMAAVSVLS). At 377–404 (AWSLGDFGGSVQDAARAPAEEGGVRASA) the chain is on the extracellular side. A helical transmembrane segment spans residues 405–425 (LALFVFLGLPFAVLCSVPFAV). Residues 426-441 (TAQLAASRGGGQGLCT) lie on the Cytoplasmic side of the membrane. Residues 442–462 (GVLNISIVVPQMAIALGAGPW) traverse the membrane as a helical segment. Residues 463–470 (DELFGEGN) are Extracellular-facing. The helical transmembrane segment at 471–491 (IPAFAMASVFAAAAAAAGVVL) threads the bilayer. Residues 492-506 (LPKVSVRSVSMAGGH) lie on the Cytoplasmic side of the membrane.

This sequence belongs to the glycoside-pentoside-hexuronide (GPH) cation symporter transporter (TC 2.A.2.4) family. As to quaternary structure, homodimer. As to expression, widely expressed. Highest expression in sink leaves and lowest in germinating seeds.

The protein localises to the cell membrane. It participates in glycan biosynthesis; sucrose metabolism. In terms of biological role, responsible for the transport of sucrose into the cell, with the concomitant uptake of protons (symport system). May also transport other glucosides. The polypeptide is Sucrose transport protein SUT3 (SUT3) (Oryza sativa subsp. japonica (Rice)).